A 146-amino-acid polypeptide reads, in one-letter code: Holo-[acyl-carrier-protein] synthase (146 aa).

Residues aspartate 9 and glutamate 63 each contribute to the Mg(2+) site.

This sequence belongs to the P-Pant transferase superfamily. AcpS family. Mg(2+) serves as cofactor.

It is found in the cytoplasm. The enzyme catalyses apo-[ACP] + CoA = holo-[ACP] + adenosine 3',5'-bisphosphate + H(+). Transfers the 4'-phosphopantetheine moiety from coenzyme A to a Ser of acyl-carrier-protein. The sequence is that of Holo-[acyl-carrier-protein] synthase from Burkholderia ambifaria (strain MC40-6).